Reading from the N-terminus, the 197-residue chain is Putative early 21.8 kDa protein (197 aa).

Its function is as follows. This protein is required for viral late gene expression. This is Putative early 21.8 kDa protein (DA26) from Orgyia pseudotsugata (Douglas-fir tussock moth).